Consider the following 109-residue polypeptide: Putative double-stranded DNA mimic protein YciU (109 aa).

Belongs to the putative dsDNA mimic protein family.

Functionally, may act as a double-stranded DNA (dsDNA) mimic. Probably regulates the activity of a dsDNA-binding protein. This chain is Putative double-stranded DNA mimic protein YciU, found in Salmonella paratyphi B (strain ATCC BAA-1250 / SPB7).